Here is a 174-residue protein sequence, read N- to C-terminus: ATP synthase subunit delta, sodium ion specific (174 aa).

The protein belongs to the ATPase delta chain family. In terms of assembly, F-type ATPases have 2 components, F(1) - the catalytic core - and F(0) - the membrane proton channel. F(1) has five subunits: alpha(3), beta(3), gamma(1), delta(1), epsilon(1). F(0) has three main subunits: a(1), b(2) and c(10-14). The alpha and beta chains form an alternating ring which encloses part of the gamma chain. F(1) is attached to F(0) by a central stalk formed by the gamma and epsilon chains, while a peripheral stalk is formed by the delta and b chains.

The protein resides in the cell inner membrane. In terms of biological role, f(1)F(0) ATP synthase produces ATP from ADP in the presence of a proton or sodium gradient. F-type ATPases consist of two structural domains, F(1) containing the extramembraneous catalytic core and F(0) containing the membrane proton channel, linked together by a central stalk and a peripheral stalk. During catalysis, ATP synthesis in the catalytic domain of F(1) is coupled via a rotary mechanism of the central stalk subunits to proton translocation. This protein is part of the stalk that links CF(0) to CF(1). It either transmits conformational changes from CF(0) to CF(1) or is implicated in proton conduction. The polypeptide is ATP synthase subunit delta, sodium ion specific (Propionigenium modestum).